Consider the following 896-residue polypeptide: Microsomal triglyceride transfer protein large subunit (896 aa).

The signal sequence occupies residues 1–21 (MILLAVLFLCFFSSYSASVKG). One can recognise a Vitellogenin domain in the interval 28-659 (LNNERLYKLT…IFQYIGKAEL (632 aa)). A disulfide bond links cysteine 174 and cysteine 194.

In terms of assembly, heterodimer; heterodimerizes with the protein disulfide isomerase (P4HB/PDI). Interacts with APOB. Interacts with PRAP1.

Its subcellular location is the endoplasmic reticulum. The protein localises to the golgi apparatus. It catalyses the reaction a 1,2-diacyl-sn-glycero-3-phosphocholine(in) = a 1,2-diacyl-sn-glycero-3-phosphocholine(out). The enzyme catalyses a 1,2-diacyl-sn-glycero-3-phosphoethanolamine(in) = a 1,2-diacyl-sn-glycero-3-phosphoethanolamine(out). It carries out the reaction a cholesterol ester(in) = a cholesterol ester(out). The catalysed reaction is a triacyl-sn-glycerol(in) = a triacyl-sn-glycerol(out). Functionally, catalyzes the transport of triglyceride, cholesteryl ester, and phospholipid between phospholipid surfaces. Required for the assembly and secretion of plasma lipoproteins that contain apolipoprotein B. May be involved in regulating cholesteryl ester biosynthesis in cells that produce lipoproteins. In Rattus norvegicus (Rat), this protein is Microsomal triglyceride transfer protein large subunit (Mttp).